The chain runs to 96 residues: Protein RnfH (96 aa).

Belongs to the UPF0125 (RnfH) family.

This chain is Protein RnfH, found in Cronobacter sakazakii (strain ATCC BAA-894) (Enterobacter sakazakii).